The following is a 369-amino-acid chain: Iron-sulfur cluster assembly SufBD family protein AF_2365 (369 aa).

The protein belongs to the iron-sulfur cluster assembly SufBD family.

The sequence is that of Iron-sulfur cluster assembly SufBD family protein AF_2365 from Archaeoglobus fulgidus (strain ATCC 49558 / DSM 4304 / JCM 9628 / NBRC 100126 / VC-16).